The following is a 194-amino-acid chain: Probable nicotinate-nucleotide adenylyltransferase (194 aa).

The protein belongs to the NadD family.

It catalyses the reaction nicotinate beta-D-ribonucleotide + ATP + H(+) = deamido-NAD(+) + diphosphate. It functions in the pathway cofactor biosynthesis; NAD(+) biosynthesis; deamido-NAD(+) from nicotinate D-ribonucleotide: step 1/1. In terms of biological role, catalyzes the reversible adenylation of nicotinate mononucleotide (NaMN) to nicotinic acid adenine dinucleotide (NaAD). In Brucella abortus (strain 2308), this protein is Probable nicotinate-nucleotide adenylyltransferase.